The sequence spans 259 residues: Diaminopimelate epimerase (259 aa).

3 residues coordinate substrate: asparagine 14, glutamine 42, and asparagine 60. The active-site Proton donor is cysteine 69. Substrate contacts are provided by residues 70 to 71 (GN), asparagine 151, asparagine 184, and 202 to 203 (ER). The active-site Proton acceptor is cysteine 211. 212–213 (GS) lines the substrate pocket.

This sequence belongs to the diaminopimelate epimerase family. As to quaternary structure, homodimer.

Its subcellular location is the cytoplasm. The catalysed reaction is (2S,6S)-2,6-diaminopimelate = meso-2,6-diaminopimelate. Its pathway is amino-acid biosynthesis; L-lysine biosynthesis via DAP pathway; DL-2,6-diaminopimelate from LL-2,6-diaminopimelate: step 1/1. Functionally, catalyzes the stereoinversion of LL-2,6-diaminopimelate (L,L-DAP) to meso-diaminopimelate (meso-DAP), a precursor of L-lysine and an essential component of the bacterial peptidoglycan. This Wolbachia sp. subsp. Brugia malayi (strain TRS) protein is Diaminopimelate epimerase.